The chain runs to 543 residues: Lipoyl synthase, apicoplast (543 aa).

The first 63 residues, 1-63 (MAYFFDFPTD…LFSLLSASQS (63 aa)), serve as a signal peptide directing secretion. 7 residues coordinate [4Fe-4S] cluster: Cys-252, Cys-257, Cys-263, Cys-278, Cys-282, Cys-285, and Ser-493. The Radical SAM core domain occupies 264–482 (WNGGTATLIL…QDIAEEMGFK (219 aa)).

Belongs to the radical SAM superfamily. Lipoyl synthase family. [4Fe-4S] cluster serves as cofactor.

It localises to the plastid. Its subcellular location is the apicoplast. It catalyses the reaction [[Fe-S] cluster scaffold protein carrying a second [4Fe-4S](2+) cluster] + N(6)-octanoyl-L-lysyl-[protein] + 2 oxidized [2Fe-2S]-[ferredoxin] + 2 S-adenosyl-L-methionine + 4 H(+) = [[Fe-S] cluster scaffold protein] + N(6)-[(R)-dihydrolipoyl]-L-lysyl-[protein] + 4 Fe(3+) + 2 hydrogen sulfide + 2 5'-deoxyadenosine + 2 L-methionine + 2 reduced [2Fe-2S]-[ferredoxin]. It participates in protein modification; protein lipoylation via endogenous pathway; protein N(6)-(lipoyl)lysine from octanoyl-[acyl-carrier-protein]: step 2/2. Catalyzes the radical-mediated insertion of two sulfur atoms into the C-6 and C-8 positions of the octanoyl moiety bound to the lipoyl domains of lipoate-dependent enzymes, thereby converting the octanoylated domains into lipoylated derivatives. The chain is Lipoyl synthase, apicoplast from Toxoplasma gondii.